Reading from the N-terminus, the 310-residue chain is TIGVCYGVVANNLPPANEVVQLYRSNGLTGMRIYFADAKALSALRGSGIGLILDVGGNDVLASLAANASNAANWVRDNVRPYYPAVNIKYIAAGNEVWGGDTQNIVPAMRNLGAALKAPGLGTIKVSTSIRFDAVTNTFPPSNGVFAQAYMTDVARLLASTGAPLLTNVYPYFAYKDNPRDIQLNYATFRPGTTTVRDPNTGLTSQCLFDAMVDAVVAALERSGAPGVRVVVSESGWPSASGFAATADNARAYNQGLIDHVGGGTPKRPGALETYIFAMFNENFKTGELTEKHFGLFNPDKSPAYPIRFQ.

Glu96 (proton donor) is an active-site residue. The active-site Nucleophile is the Glu234.

Belongs to the glycosyl hydrolase 17 family. As to quaternary structure, monomer. Young leaves and roots.

It carries out the reaction Hydrolysis of (1-&gt;3)-beta-D-glucosidic linkages in (1-&gt;3)-beta-D-glucans.. Functionally, may provide a degree of protection against microbial invasion of germinated barley grain through its ability to degrade fungal cell wall polysaccharides. Does not hydrolyze (1,3;1,4)-beta-D-glucans, (1,6)-beta-D-glucan, CM-cellulose, insoluble (1,3)-beta-D-glucans or aryl beta-D-glycosides. This chain is Glucan endo-1,3-beta-glucosidase GI, found in Hordeum vulgare (Barley).